The following is a 600-amino-acid chain: Aspartate--tRNA(Asp/Asn) ligase (600 aa).

E187 provides a ligand contact to L-aspartate. The segment at 211-214 is aspartate; it reads QIFK. L-aspartate is bound by residues R233 and H463. 233-235 serves as a coordination point for ATP; sequence RDE. Residue E497 coordinates ATP. Residue R504 coordinates L-aspartate. ATP is bound at residue 549–552; that stretch reads GVDR.

The protein belongs to the class-II aminoacyl-tRNA synthetase family. Type 1 subfamily. In terms of assembly, homodimer.

It is found in the cytoplasm. It carries out the reaction tRNA(Asx) + L-aspartate + ATP = L-aspartyl-tRNA(Asx) + AMP + diphosphate. In terms of biological role, aspartyl-tRNA synthetase with relaxed tRNA specificity since it is able to aspartylate not only its cognate tRNA(Asp) but also tRNA(Asn). Reaction proceeds in two steps: L-aspartate is first activated by ATP to form Asp-AMP and then transferred to the acceptor end of tRNA(Asp/Asn). The sequence is that of Aspartate--tRNA(Asp/Asn) ligase from Wolbachia pipientis wMel.